A 401-amino-acid chain; its full sequence is Tryptophan synthase beta chain (401 aa).

N6-(pyridoxal phosphate)lysine is present on lysine 91.

Belongs to the TrpB family. In terms of assembly, tetramer of two alpha and two beta chains. It depends on pyridoxal 5'-phosphate as a cofactor.

It catalyses the reaction (1S,2R)-1-C-(indol-3-yl)glycerol 3-phosphate + L-serine = D-glyceraldehyde 3-phosphate + L-tryptophan + H2O. It functions in the pathway amino-acid biosynthesis; L-tryptophan biosynthesis; L-tryptophan from chorismate: step 5/5. The beta subunit is responsible for the synthesis of L-tryptophan from indole and L-serine. This Lactococcus lactis subsp. cremoris (strain SK11) protein is Tryptophan synthase beta chain.